Consider the following 347-residue polypeptide: Holliday junction branch migration complex subunit RuvB (347 aa).

Residues 13-195 (NEDAVTSGEV…FGIVEHMQYY (183 aa)) are large ATPase domain (RuvB-L). ATP contacts are provided by residues Leu34, Arg35, Gly76, Lys79, Thr80, Thr81, 142–144 (EDY), Arg185, Tyr195, and Arg232. Thr80 provides a ligand contact to Mg(2+). The tract at residues 196–266 (TIDELEKIVQ…TTEGALKQLQ (71 aa)) is small ATPAse domain (RuvB-S). The head domain (RuvB-H) stretch occupies residues 269–347 (DEGLDQTDRR…QLGLPVPGDK (79 aa)). Arg329 provides a ligand contact to DNA.

This sequence belongs to the RuvB family. In terms of assembly, homohexamer. Forms an RuvA(8)-RuvB(12)-Holliday junction (HJ) complex. HJ DNA is sandwiched between 2 RuvA tetramers; dsDNA enters through RuvA and exits via RuvB. An RuvB hexamer assembles on each DNA strand where it exits the tetramer. Each RuvB hexamer is contacted by two RuvA subunits (via domain III) on 2 adjacent RuvB subunits; this complex drives branch migration. In the full resolvosome a probable DNA-RuvA(4)-RuvB(12)-RuvC(2) complex forms which resolves the HJ.

Its subcellular location is the cytoplasm. The catalysed reaction is ATP + H2O = ADP + phosphate + H(+). In terms of biological role, the RuvA-RuvB-RuvC complex processes Holliday junction (HJ) DNA during genetic recombination and DNA repair, while the RuvA-RuvB complex plays an important role in the rescue of blocked DNA replication forks via replication fork reversal (RFR). RuvA specifically binds to HJ cruciform DNA, conferring on it an open structure. The RuvB hexamer acts as an ATP-dependent pump, pulling dsDNA into and through the RuvAB complex. RuvB forms 2 homohexamers on either side of HJ DNA bound by 1 or 2 RuvA tetramers; 4 subunits per hexamer contact DNA at a time. Coordinated motions by a converter formed by DNA-disengaged RuvB subunits stimulates ATP hydrolysis and nucleotide exchange. Immobilization of the converter enables RuvB to convert the ATP-contained energy into a lever motion, pulling 2 nucleotides of DNA out of the RuvA tetramer per ATP hydrolyzed, thus driving DNA branch migration. The RuvB motors rotate together with the DNA substrate, which together with the progressing nucleotide cycle form the mechanistic basis for DNA recombination by continuous HJ branch migration. Branch migration allows RuvC to scan DNA until it finds its consensus sequence, where it cleaves and resolves cruciform DNA. The polypeptide is Holliday junction branch migration complex subunit RuvB (Lactobacillus helveticus (strain DPC 4571)).